Here is a 118-residue protein sequence, read N- to C-terminus: Ribosome-binding factor A (118 aa).

The protein belongs to the RbfA family. In terms of assembly, monomer. Binds 30S ribosomal subunits, but not 50S ribosomal subunits or 70S ribosomes.

The protein resides in the cytoplasm. Its function is as follows. One of several proteins that assist in the late maturation steps of the functional core of the 30S ribosomal subunit. Associates with free 30S ribosomal subunits (but not with 30S subunits that are part of 70S ribosomes or polysomes). Required for efficient processing of 16S rRNA. May interact with the 5'-terminal helix region of 16S rRNA. This is Ribosome-binding factor A from Latilactobacillus sakei subsp. sakei (strain 23K) (Lactobacillus sakei subsp. sakei).